The sequence spans 253 residues: 5-oxoprolinase subunit A (253 aa).

This sequence belongs to the LamB/PxpA family. As to quaternary structure, forms a complex composed of PxpA, PxpB and PxpC.

The catalysed reaction is 5-oxo-L-proline + ATP + 2 H2O = L-glutamate + ADP + phosphate + H(+). In terms of biological role, catalyzes the cleavage of 5-oxoproline to form L-glutamate coupled to the hydrolysis of ATP to ADP and inorganic phosphate. In Syntrophobacter fumaroxidans (strain DSM 10017 / MPOB), this protein is 5-oxoprolinase subunit A.